Reading from the N-terminus, the 138-residue chain is ATP synthase epsilon chain (138 aa).

It belongs to the ATPase epsilon chain family. As to quaternary structure, F-type ATPases have 2 components, CF(1) - the catalytic core - and CF(0) - the membrane proton channel. CF(1) has five subunits: alpha(3), beta(3), gamma(1), delta(1), epsilon(1). CF(0) has three main subunits: a, b and c.

It localises to the cell membrane. Functionally, produces ATP from ADP in the presence of a proton gradient across the membrane. This Streptococcus pyogenes serotype M2 (strain MGAS10270) protein is ATP synthase epsilon chain.